A 238-amino-acid polypeptide reads, in one-letter code: Small ribosomal subunit protein eS4 (238 aa).

The region spanning I38–P109 is the S4 RNA-binding domain.

The protein belongs to the eukaryotic ribosomal protein eS4 family.

This is Small ribosomal subunit protein eS4 from Pyrobaculum neutrophilum (strain DSM 2338 / JCM 9278 / NBRC 100436 / V24Sta) (Thermoproteus neutrophilus).